The chain runs to 240 residues: LexA repressor (240 aa).

Positions 26–46 (FDEMKDALDLKSKSGIHRLIT) form a DNA-binding region, H-T-H motif. Catalysis depends on for autocatalytic cleavage activity residues serine 161 and lysine 199.

Belongs to the peptidase S24 family. Homodimer.

The enzyme catalyses Hydrolysis of Ala-|-Gly bond in repressor LexA.. Its function is as follows. Represses a number of genes involved in the response to DNA damage (SOS response), including recA and lexA. In the presence of single-stranded DNA, RecA interacts with LexA causing an autocatalytic cleavage which disrupts the DNA-binding part of LexA, leading to derepression of the SOS regulon and eventually DNA repair. The chain is LexA repressor from Methylobacterium nodulans (strain LMG 21967 / CNCM I-2342 / ORS 2060).